Consider the following 369-residue polypeptide: MEGTPPGAAPSSALAAVLKHSSALPPESAQVQGYDFNRGVDYHALLDAYRTTGFQATNFGRAVQQVNAMIEKKLEPLAVDEDHHADLTQSRRPLTGCTIFLGYTSNLISSGIRETIRYLVQHNMVDVLVTTAGGVEEDLIKCLAPTYLGEFSLRGKELRESGINRIGNLLVPNDNYCKFEDWLMPILDQMVLEQNTEGVKWTPSKMISRLGKEINNPDSVYYWAHKNHIPVLSPALTDGSLGDMIFFHSYKNPGLVLDIVEDLRLINTQAIFAKRSGMIILGGGVVKHHIANANLMRNGADYAVYINTAQEFDGSDSGARPDEAVSWGKIRMDAQPVKVYADASLVFPLLVAETFAQKADAFRAEKNED.

NAD(+) is bound by residues 105–109 (SNLIS), 131–133 (TAG), Glu137, and Asp238. 136–137 (EE) lines the spermidine pocket. Asp243 is a binding site for spermidine. An NAD(+)-binding site is contributed by Gly283. Spermidine is bound at residue His288. 308–309 (TA) is a binding site for NAD(+). Spermidine-binding positions include 314-316 (GSD) and 323-329 (EAVSWGK). The active-site Nucleophile is the Lys329. An NAD(+)-binding site is contributed by 342-343 (DA).

The protein belongs to the deoxyhypusine synthase family. It depends on NAD(+) as a cofactor.

It carries out the reaction [eIF5A protein]-L-lysine + spermidine = [eIF5A protein]-deoxyhypusine + propane-1,3-diamine. It participates in protein modification; eIF5A hypusination. Catalyzes the NAD-dependent oxidative cleavage of spermidine and the subsequent transfer of the butylamine moiety of spermidine to the epsilon-amino group of a critical lysine residue of the eIF-5A precursor protein to form the intermediate deoxyhypusine residue. This is the first step of the post-translational modification of that lysine into an unusual amino acid residue named hypusine. Hypusination is unique to mature eIF-5A factor and is essential for its function. This chain is Deoxyhypusine synthase (Dhps), found in Mus musculus (Mouse).